The primary structure comprises 938 residues: Myocardin (938 aa).

The MEF2C-binding motif lies at 12-27 (IRSKFRSVLQLRLQQR). The stretch at 18–43 (SVLQLRLQQRRTQEQLANQGIIPPLK) is one RPEL 1 repeat. A compositionally biased stretch (basic and acidic residues) spans 48–61 (FHEQRKHLDSDKAK). Residues 48 to 68 (FHEQRKHLDSDKAKNSLKRKA) are disordered. 2 RPEL repeats span residues 62–87 (NSLKRKARNRCNSADLVNMHILQAST) and 106–131 (DDLNEKIALRPGPLELVEKNILPVDS). The tract at residues 153–205 (FEEDSSSDGLSPDQTRSEDPQNSAGSPPDAKASDTPSTGSLGTNQDLASGSEN) is HDAC5-binding. A disordered region spans residues 154-281 (EEDSSSDGLS…DQKAEKSPPP (128 aa)). Composition is skewed to polar residues over residues 159–177 (SDGLSPDQTRSEDPQNSAG), 186–203 (DTPSTGSLGTNQDLASGS), and 210–220 (SASQPSHQSDA). Over residues 248–265 (NRHKKPKDPKPKVKKLKY) the composition is skewed to basic residues. The 35-residue stretch at 371–405 (LDDLKVSELRQQLRIRGLPVSGTKTALMDRLRPFQ) folds into the SAP domain. Ser451, Ser455, Ser459, and Ser463 each carry phosphoserine; by GSK3-beta. A coiled-coil region spans residues 516-561 (EKDKMLVEKQKVINELTWKLQQEQRQVEELRMQLQKQKRNNCSEKK). A phosphoserine; by GSK3-beta mark is found at Ser626, Ser630, Ser634, and Ser638. 2 disordered regions span residues 635–678 (PQHS…SSPI) and 693–734 (SDKV…MTRS). Positions 699–715 (KFSIPSPTFSKSSSAIS) are enriched in low complexity. The segment at 717 to 938 (VTQPPSYEDA…SSMDLHLQQW (222 aa)) is required for interaction with and ubiquitination by STUB1. Ser815, Ser862, and Ser869 each carry phosphoserine; by MAPK1 and MAPK3. The residue at position 896 (Thr896) is a Phosphothreonine; by MAPK1 and MAPK3.

As to quaternary structure, homodimer. Interacts with SRF, its association does not depend on specific DNA sequences for ternary complex formation. Interacts with MLLT7/FOXO4. Interacts (via C-terminal) with EP300 (via the CREB-binding domain). Interacts with HDAC4 and HDAC5. Interacts with MEF2C. Interacts (via C-terminus) with STUB1/CHIP. Interacts with PURB. Post-translationally, ubiquitinated; by STUB1/CHIP at the C-terminus, leading to its degradation by the proteasome. Phosphorylation by GSK3B is required for STUB1/CHIP-mediated ubiquitination. In terms of processing, phosphorylation negatively regulates the intrinsic myocardin transcriptional activity. Phosphorylated; by GSK3B. In terms of tissue distribution, expressed in the heart, aorta and bladder. Expressed in smooth muscle cell-containing tissues: stomach, small intestine, colon, lung, placenta and uterus. Very faint expression in prostate and skeletal muscle.

The protein localises to the nucleus. Its function is as follows. Smooth muscle cells (SM) and cardiac muscle cells-specific transcriptional factor which uses the canonical single or multiple CArG boxes DNA sequence. Acts as a cofactor of serum response factor (SRF) with the potential to modulate SRF-target genes. Plays a crucial role in cardiogenesis, urinary bladder development, and differentiation of the smooth muscle cell lineage (myogenesis). Positively regulates the transcription of genes involved in vascular smooth muscle contraction. This chain is Myocardin (MYOCD), found in Homo sapiens (Human).